A 93-amino-acid polypeptide reads, in one-letter code: Alpha-defensin 7 (93 aa).

The first 19 residues, Met-1–Ala-19, serve as a signal peptide directing secretion. Residues Asp-20–Ser-58 constitute a propeptide that is removed on maturation. The tract at residues Ile-22–Glu-56 is disordered. Disulfide bonds link Cys-64/Cys-92, Cys-66/Cys-81, and Cys-71/Cys-91.

Belongs to the alpha-defensin family. In terms of tissue distribution, paneth cells of the small bowel.

It localises to the secreted. Probably contributes to the antimicrobial barrier function of the small bowel mucosa. The polypeptide is Alpha-defensin 7 (Defa7) (Mus musculus (Mouse)).